Reading from the N-terminus, the 735-residue chain is DNA ligase 1 (735 aa).

Residues 1-11 (MAGDKQGDKQA) show a composition bias toward basic and acidic residues. The disordered stretch occupies residues 1–23 (MAGDKQGDKQAETTSVPAEARER). NAD(+) is bound by residues 48–52 (DAEFD), 97–98 (SL), and Glu128. The active-site N6-AMP-lysine intermediate is Lys130. NAD(+) contacts are provided by Arg151, Glu188, Lys305, and Lys329. Residues Cys423, Cys426, Cys442, and Cys448 each coordinate Zn(2+). Residues 643–732 (EGPRPLEGLT…PEAAADVALS (90 aa)) form the BRCT domain.

It belongs to the NAD-dependent DNA ligase family. LigA subfamily. Mg(2+) is required as a cofactor. It depends on Mn(2+) as a cofactor.

It catalyses the reaction NAD(+) + (deoxyribonucleotide)n-3'-hydroxyl + 5'-phospho-(deoxyribonucleotide)m = (deoxyribonucleotide)n+m + AMP + beta-nicotinamide D-nucleotide.. In terms of biological role, DNA ligase that catalyzes the formation of phosphodiester linkages between 5'-phosphoryl and 3'-hydroxyl groups in double-stranded DNA using NAD as a coenzyme and as the energy source for the reaction. It is essential for DNA replication and repair of damaged DNA. The chain is DNA ligase 1 from Streptomyces coelicolor (strain ATCC BAA-471 / A3(2) / M145).